The sequence spans 82 residues: Neuromacin (82 aa).

The signal sequence occupies residues 1–23; the sequence is MALLNKLLCFALVFMIFGEFVTP. Intrachain disulfides connect Cys-25-Cys-32, Cys-47-Cys-51, Cys-61-Cys-69, and Cys-79-Cys-81.

It belongs to the macin family.

The protein resides in the secreted. This chain is Neuromacin, found in Hirudo medicinalis (Medicinal leech).